We begin with the raw amino-acid sequence, 597 residues long: Elongation factor 4 (597 aa).

The tr-type G domain occupies 2 to 184 (DHIRNFSIIA…ALVAKVPPPK (183 aa)). Residues 14 to 19 (DHGKST) and 131 to 134 (NKID) contribute to the GTP site.

Belongs to the TRAFAC class translation factor GTPase superfamily. Classic translation factor GTPase family. LepA subfamily.

The protein localises to the cell inner membrane. The catalysed reaction is GTP + H2O = GDP + phosphate + H(+). In terms of biological role, required for accurate and efficient protein synthesis under certain stress conditions. May act as a fidelity factor of the translation reaction, by catalyzing a one-codon backward translocation of tRNAs on improperly translocated ribosomes. Back-translocation proceeds from a post-translocation (POST) complex to a pre-translocation (PRE) complex, thus giving elongation factor G a second chance to translocate the tRNAs correctly. Binds to ribosomes in a GTP-dependent manner. This Paraburkholderia xenovorans (strain LB400) protein is Elongation factor 4.